The chain runs to 554 residues: 3-(3-hydroxy-phenyl)propionate/3-hydroxycinnamic acid hydroxylase (554 aa).

Residues 17 to 46 (QVAIAGAGPVGLMMANYLGQMGIDVLVVEK) and 285 to 295 (FRIDRVLLAGD) each bind FAD.

This sequence belongs to the PheA/TfdB FAD monooxygenase family. FAD serves as cofactor.

The enzyme catalyses 3-(3-hydroxyphenyl)propanoate + NADH + O2 + H(+) = 3-(2,3-dihydroxyphenyl)propanoate + NAD(+) + H2O. It carries out the reaction (2E)-3-(3-hydroxyphenyl)prop-2-enoate + NADH + O2 + H(+) = (2E)-3-(2,3-dihydroxyphenyl)prop-2-enoate + NAD(+) + H2O. The protein operates within aromatic compound metabolism; 3-phenylpropanoate degradation. In terms of biological role, catalyzes the insertion of one atom of molecular oxygen into position 2 of the phenyl ring of 3-(3-hydroxyphenyl)propionate (3-HPP) and hydroxycinnamic acid (3HCI). The protein is 3-(3-hydroxy-phenyl)propionate/3-hydroxycinnamic acid hydroxylase of Escherichia coli O139:H28 (strain E24377A / ETEC).